A 306-amino-acid polypeptide reads, in one-letter code: CRISPR-associated endonuclease Cas1 (306 aa).

Glu-143, His-210, and Asp-223 together coordinate Mn(2+).

The protein belongs to the CRISPR-associated endonuclease Cas1 family. Homodimer, forms a heterotetramer with a Cas2 homodimer. Requires Mg(2+) as cofactor. It depends on Mn(2+) as a cofactor.

CRISPR (clustered regularly interspaced short palindromic repeat), is an adaptive immune system that provides protection against mobile genetic elements (viruses, transposable elements and conjugative plasmids). CRISPR clusters contain spacers, sequences complementary to antecedent mobile elements, and target invading nucleic acids. CRISPR clusters are transcribed and processed into CRISPR RNA (crRNA). Acts as a dsDNA endonuclease. Involved in the integration of spacer DNA into the CRISPR cassette. This chain is CRISPR-associated endonuclease Cas1, found in Geobacter sulfurreducens (strain ATCC 51573 / DSM 12127 / PCA).